Here is a 213-residue protein sequence, read N- to C-terminus: uncharacterized protein (213 aa).

Residues Gly-53, Glu-74, and Asp-97 each coordinate S-adenosyl-L-methionine.

This sequence belongs to the methyltransferase superfamily. YrrT family.

Its function is as follows. Could be a S-adenosyl-L-methionine-dependent methyltransferase. This is an uncharacterized protein from Bacillus velezensis (strain DSM 23117 / BGSC 10A6 / LMG 26770 / FZB42) (Bacillus amyloliquefaciens subsp. plantarum).